We begin with the raw amino-acid sequence, 1450 residues long: DNA-directed RNA polymerase RPB1 homolog (1450 aa).

It belongs to the RNA polymerase beta' chain family. In terms of assembly, part of the viral DNA-directed RNA polymerase that consists of 8 polII-like subunits (RPB1, RPB2, RPB3, RPB5, RPB6, RPB7, RPB9, RPB10), a capping enzyme and a termination factor.

It is found in the virion. It carries out the reaction RNA(n) + a ribonucleoside 5'-triphosphate = RNA(n+1) + diphosphate. Functionally, catalytic component of the DNA-directed RNA polymerase (RNAP) that catalyzes the transcription in the cytoplasm of viral DNA into RNA using the four ribonucleoside triphosphates as substrates. Forms the polymerase active center together with RPB2. Part of the core element with the central large cleft, the clamp element that moves to open and close the cleft and the jaws that are thought to grab the incoming DNA template. In African swine fever virus (isolate Warthog/Namibia/Wart80/1980) (ASFV), this protein is DNA-directed RNA polymerase RPB1 homolog.